The chain runs to 118 residues: Ribosome-binding factor A (118 aa).

Belongs to the RbfA family. In terms of assembly, monomer. Binds 30S ribosomal subunits, but not 50S ribosomal subunits or 70S ribosomes.

Its subcellular location is the cytoplasm. One of several proteins that assist in the late maturation steps of the functional core of the 30S ribosomal subunit. Associates with free 30S ribosomal subunits (but not with 30S subunits that are part of 70S ribosomes or polysomes). Required for efficient processing of 16S rRNA. May interact with the 5'-terminal helix region of 16S rRNA. The sequence is that of Ribosome-binding factor A from Streptococcus pyogenes serotype M1.